Here is a 113-residue protein sequence, read N- to C-terminus: Iron-sulfur cluster insertion protein ErpA (113 aa).

3 residues coordinate iron-sulfur cluster: C41, C105, and C107.

The protein belongs to the HesB/IscA family. In terms of assembly, homodimer. Requires iron-sulfur cluster as cofactor.

In terms of biological role, required for insertion of 4Fe-4S clusters for at least IspG. This chain is Iron-sulfur cluster insertion protein ErpA, found in Vibrio vulnificus (strain CMCP6).